Consider the following 122-residue polypeptide: Large ribosomal subunit protein uL14 (122 aa).

It belongs to the universal ribosomal protein uL14 family. As to quaternary structure, part of the 50S ribosomal subunit. Forms a cluster with proteins L3 and L19. In the 70S ribosome, L14 and L19 interact and together make contacts with the 16S rRNA in bridges B5 and B8.

Binds to 23S rRNA. Forms part of two intersubunit bridges in the 70S ribosome. The protein is Large ribosomal subunit protein uL14 of Mycolicibacterium gilvum (strain PYR-GCK) (Mycobacterium gilvum (strain PYR-GCK)).